We begin with the raw amino-acid sequence, 971 residues long: Exportin-2 (971 aa).

Residues 29-102 (AEKYLESVEG…KSSIINLMLR (74 aa)) enclose the Importin N-terminal domain.

The protein belongs to the XPO2/CSE1 family.

The protein localises to the cytoplasm. It is found in the nucleus. Export receptor for importin alpha. Mediates importin-alpha re-export from the nucleus to the cytoplasm after import substrates have been released into the nucleoplasm. This Xenopus laevis (African clawed frog) protein is Exportin-2 (cse1l).